The following is a 658-amino-acid chain: Glycogen debranching enzyme (658 aa).

Asp-336 (nucleophile) is an active-site residue. Catalysis depends on Glu-371, which acts as the Proton donor. Positions 459-486 (EANGEENRDGTNSNYSDNNGKEGLGGPL) are disordered.

This sequence belongs to the glycosyl hydrolase 13 family.

The enzyme catalyses Hydrolysis of (1-&gt;6)-alpha-D-glucosidic linkages to branches with degrees of polymerization of three or four glucose residues in limit dextrin.. The protein operates within glycan degradation; glycogen degradation. Functionally, removes maltotriose and maltotetraose chains that are attached by 1,6-alpha-linkage to the limit dextrin main chain, generating a debranched limit dextrin. The sequence is that of Glycogen debranching enzyme from Salmonella gallinarum (strain 287/91 / NCTC 13346).